Reading from the N-terminus, the 65-residue chain is Large ribosomal subunit protein bL33m (65 aa).

It belongs to the bacterial ribosomal protein bL33 family. Component of the mitochondrial ribosome large subunit (39S) which comprises a 16S rRNA and about 50 distinct proteins.

It is found in the mitochondrion. The protein is Large ribosomal subunit protein bL33m (mRpL33) of Anopheles gambiae (African malaria mosquito).